The sequence spans 257 residues: 5-oxoprolinase subunit A (257 aa).

This sequence belongs to the LamB/PxpA family. Forms a complex composed of PxpA, PxpB and PxpC.

The enzyme catalyses 5-oxo-L-proline + ATP + 2 H2O = L-glutamate + ADP + phosphate + H(+). Its function is as follows. Catalyzes the cleavage of 5-oxoproline to form L-glutamate coupled to the hydrolysis of ATP to ADP and inorganic phosphate. The protein is 5-oxoprolinase subunit A of Halalkalibacterium halodurans (strain ATCC BAA-125 / DSM 18197 / FERM 7344 / JCM 9153 / C-125) (Bacillus halodurans).